Reading from the N-terminus, the 224-residue chain is UPF0441 protein PC1_0312 (224 aa).

Residues 178–224 (PKTALAPKPATTSTITRGGFGETVAKQNSMQRSSASSSSSSSRSMGG) are disordered. Low complexity predominate over residues 209–224 (RSSASSSSSSSRSMGG).

The protein belongs to the UPF0441 family.

The sequence is that of UPF0441 protein PC1_0312 from Pectobacterium carotovorum subsp. carotovorum (strain PC1).